We begin with the raw amino-acid sequence, 341 residues long: Phosphate acyltransferase (341 aa).

The protein belongs to the PlsX family. In terms of assembly, homodimer. Probably interacts with PlsY.

Its subcellular location is the cytoplasm. The catalysed reaction is a fatty acyl-[ACP] + phosphate = an acyl phosphate + holo-[ACP]. Its pathway is lipid metabolism; phospholipid metabolism. Its function is as follows. Catalyzes the reversible formation of acyl-phosphate (acyl-PO(4)) from acyl-[acyl-carrier-protein] (acyl-ACP). This enzyme utilizes acyl-ACP as fatty acyl donor, but not acyl-CoA. This chain is Phosphate acyltransferase, found in Vibrio cholerae serotype O1 (strain ATCC 39541 / Classical Ogawa 395 / O395).